The primary structure comprises 254 residues: Gamma-glutamyl-gamma-aminobutyrate hydrolase (254 aa).

The Glutamine amidotransferase type-1 domain maps to 16–250; that stretch reads RNRLKGHATQ…ITACQHHIAE (235 aa). Catalysis depends on Cys-114, which acts as the Nucleophile. Active-site residues include His-222 and Glu-224.

The protein belongs to the peptidase C26 family.

The enzyme catalyses 4-(gamma-L-glutamylamino)butanoate + H2O = 4-aminobutanoate + L-glutamate. Its pathway is amine and polyamine degradation; putrescine degradation; 4-aminobutanoate from putrescine: step 4/4. Involved in the breakdown of putrescine via hydrolysis of the gamma-glutamyl linkage of gamma-glutamyl-gamma-aminobutyrate. In Escherichia coli O157:H7, this protein is Gamma-glutamyl-gamma-aminobutyrate hydrolase (puuD).